Consider the following 152-residue polypeptide: MAANSKTAIRLSLRAGERIFINGAVLRADRKVSLELLNDATFLLENHVLQPEDTTTPLRQLYFAAQMMLIEPAMREQAGATFAQMLKGMFAMFKDAEILNALKLVDELVHNGRVFEALKTIRAQYPREAELMGAQPVVWPVTKSGKSAGANP.

Belongs to the FlbT family.

In terms of biological role, has a post-transcriptional repressor function in flagellum biogenesis. Associates with the 5'-UTR of fljK mRNA and promotes its degradation. This is Probable flagellum biosynthesis repressor protein FlbT from Brucella abortus (strain S19).